We begin with the raw amino-acid sequence, 552 residues long: MNQAMATPLSLSCCSPTLTRSTLFFTKTFPFSRSFSTPLPLSTKTLISLSPPHRTFAVRAESQNGADPARQYDFDLFTIGAGSGGVRASRFASNFGASSAVCELPFSTISSDTTGGVGGTCVIRGCVPKKLLVYASKFSHEFEESNGFGWRYDSEPKHDWSSLIANKNAELQRLTGIYKNTLKNAGVKLIEGRGKIVDAHTVDVDGKLYSAKHILVSVGGRPFIPDIPGKEYAIDSDAALDLPSKPQKIAIVGGGYIALEFAGIFNGLKSEVHVFIRQKKVLRGFDEEIRDFVAENMALRGIEFHTEESPVAITKAADGSLSLKTNKGTEEGFSHIMFATGRSPNTKDLGLESVGVKVAKDGSIEVDEYSQTSVPSIWAIGDATNRVNLTPVALMEGVALAKTLFQNEPTKPDYRAIPSAVFSQPPIGGVGLTEEQAAEQYGDIDVFTANFRPMKATLSGLPDRVFMKLIVSAETNVVLGLHMCGEDAAEIAQGFAVGIKAGLTKADFDATVGIHPTAAEEFVTMRTPTRKVRKNQASQGKSDSKAKAVAGS.

The transit peptide at 1–60 directs the protein to the chloroplast and mitochondrion; sequence MNQAMATPLSLSCCSPTLTRSTLFFTKTFPFSRSFSTPLPLSTKTLISLSPPHRTFAVRA. FAD-binding residues include Ser83, Gly84, Glu103, Thr120, Cys121, and Lys129. Residue Ser83 participates in glutathione binding. Cys121 and Cys126 are disulfide-bonded. Tyr178 lines the glutathione pocket. Gly194 serves as a coordination point for FAD. 6 residues coordinate NADP(+): Gly254, Ile257, Glu260, Arg277, Arg283, and Gly341. 2 residues coordinate FAD: Asp382 and Thr390. Ala420 contacts NADP(+). His515 contacts FAD. The active-site Proton acceptor is the His515. The disordered stretch occupies residues 527 to 552; it reads TPTRKVRKNQASQGKSDSKAKAVAGS.

This sequence belongs to the class-I pyridine nucleotide-disulfide oxidoreductase family. In terms of assembly, homodimer. Requires FAD as cofactor.

It localises to the plastid. It is found in the chloroplast. The protein resides in the mitochondrion. It carries out the reaction 2 glutathione + NADP(+) = glutathione disulfide + NADPH + H(+). Catalyzes the reduction of glutathione disulfide (GSSG) to reduced glutathione (GSH). Maintains high levels of GSH in the chloroplast. The protein is Glutathione reductase, chloroplastic/mitochondrial (GR) of Pisum sativum (Garden pea).